A 743-amino-acid chain; its full sequence is Catalase-peroxidase (743 aa).

Over residues 1-15 (MSSDSRPPQPDTSTQ) the composition is skewed to polar residues. Residues 1–40 (MSSDSRPPQPDTSTQSNSESESPAISSPTPQDHAPMTNRD) are disordered. Residues 16 to 28 (SNSESESPAISSP) are compositionally biased toward low complexity. Positions 110–233 (WHAAGTYRIQ…YGATTMGLIY (124 aa)) form a cross-link, tryptophyl-tyrosyl-methioninium (Trp-Tyr) (with M-259). Catalysis depends on His-111, which acts as the Proton acceptor. A cross-link (tryptophyl-tyrosyl-methioninium (Tyr-Met) (with W-110)) is located at residues 233 to 259 (YVNPEGPEGKPDPVAAAHDIRETFARM). His-274 serves as a coordination point for heme b. The tract at residues 490-511 (DKRGGANGGRLRLEPQKSWESN) is disordered.

Belongs to the peroxidase family. Peroxidase/catalase subfamily. Homodimer or homotetramer. Requires heme b as cofactor. In terms of processing, formation of the three residue Trp-Tyr-Met cross-link is important for the catalase, but not the peroxidase activity of the enzyme.

The enzyme catalyses H2O2 + AH2 = A + 2 H2O. It catalyses the reaction 2 H2O2 = O2 + 2 H2O. Its function is as follows. Bifunctional enzyme with both catalase and broad-spectrum peroxidase activity. The polypeptide is Catalase-peroxidase (Mycobacterium ulcerans (strain Agy99)).